A 153-amino-acid chain; its full sequence is Arachidonate 5-lipoxygenase-activating protein (153 aa).

The Lumenal segment spans residues 1 to 8 (MDQETVGN). Residues 9–30 (VVLLAIVTLISVVQNGFFAHKV) traverse the membrane as a helical segment. Over 31 to 52 (EHESRTQNGRSFQRTGTLAFER) the chain is Cytoplasmic. Residues 53 to 77 (VYTANQNCVDAYPTFLAVLWSAGLL) form a helical membrane-spanning segment. At 78–80 (CSQ) the chain is on the lumenal side. Residues 81-102 (VPAAFAGLMYLLVRQKYFVGYL) traverse the membrane as a helical segment. Residues 103–107 (GERTQ) are Cytoplasmic-facing. An intramembrane segment occupies 108–115 (STPGYIFG). The helical transmembrane segment at 116 to 128 (KRIILFLFLMSVA) threads the bilayer. Residues 129 to 153 (GIFNYYLIFFFGSDFENYIKTVTTT) are Lumenal-facing.

The protein belongs to the MAPEG family. Homotrimer. Interacts with LTC4S and ALOX5.

It localises to the nucleus membrane. The protein localises to the endoplasmic reticulum membrane. Required for leukotriene biosynthesis by ALOX5 (5-lipoxygenase). Anchors ALOX5 to the membrane. Binds arachidonic acid, and could play an essential role in the transfer of arachidonic acid to ALOX5. Binds to MK-886, a compound that blocks the biosynthesis of leukotrienes. In Macaca mulatta (Rhesus macaque), this protein is Arachidonate 5-lipoxygenase-activating protein (ALOX5AP).